A 201-amino-acid chain; its full sequence is Pyridoxal 5'-phosphate synthase subunit PdxT (201 aa).

Position 50-52 (50-52 (GES)) interacts with L-glutamine. The active-site Nucleophile is Cys82. L-glutamine contacts are provided by residues Arg111 and 139 to 140 (IR). Catalysis depends on charge relay system residues His180 and Glu182.

This sequence belongs to the glutaminase PdxT/SNO family. In the presence of PdxS, forms a dodecamer of heterodimers. Only shows activity in the heterodimer.

It carries out the reaction aldehydo-D-ribose 5-phosphate + D-glyceraldehyde 3-phosphate + L-glutamine = pyridoxal 5'-phosphate + L-glutamate + phosphate + 3 H2O + H(+). The catalysed reaction is L-glutamine + H2O = L-glutamate + NH4(+). Its pathway is cofactor biosynthesis; pyridoxal 5'-phosphate biosynthesis. Functionally, catalyzes the hydrolysis of glutamine to glutamate and ammonia as part of the biosynthesis of pyridoxal 5'-phosphate. The resulting ammonia molecule is channeled to the active site of PdxS. The chain is Pyridoxal 5'-phosphate synthase subunit PdxT from Nocardioides sp. (strain ATCC BAA-499 / JS614).